The following is a 165-amino-acid chain: Zinc finger C2H2 protein ECU11_0990 (165 aa).

2 stretches are compositionally biased toward basic and acidic residues: residues 1-10 and 19-32; these read MEAESPKERV and DPER…DTSS. The tract at residues 1-38 is disordered; sequence MEAESPKERVQGVSGESWDPERGVKEREDTSSKKGKGV. C2H2-type zinc fingers lie at residues 103–125 and 136–158; these read FGCE…KAQH and LFCP…SRYH.

This chain is Zinc finger C2H2 protein ECU11_0990, found in Encephalitozoon cuniculi (strain GB-M1) (Microsporidian parasite).